We begin with the raw amino-acid sequence, 234 residues long: Probable Ufm1-specific protease 1 (234 aa).

Catalysis depends on residues Cys-70, Asp-194, and His-196.

Belongs to the peptidase C78 family.

In terms of biological role, thiol protease which recognizes and hydrolyzes the peptide bond at the C-terminal Gly of UFM1, a ubiquitin-like modifier protein bound to a number of target proteins. This chain is Probable Ufm1-specific protease 1, found in Drosophila melanogaster (Fruit fly).